We begin with the raw amino-acid sequence, 310 residues long: 2-dehydro-3-deoxygluconokinase (310 aa).

Residues 29 to 33 (GDTLN), Tyr-89, 103 to 105 (YWR), and Arg-171 contribute to the substrate site. ATP-binding positions include 169–171 (NYR), 229–234 (KRGADA), and 262–265 (AAGD). Substrate is bound at residue Asp-265. The active-site Proton acceptor is Asp-265.

The protein belongs to the carbohydrate kinase PfkB family.

It carries out the reaction 2-dehydro-3-deoxy-D-gluconate + ATP = 2-dehydro-3-deoxy-6-phospho-D-gluconate + ADP + H(+). It functions in the pathway carbohydrate acid metabolism; 2-dehydro-3-deoxy-D-gluconate degradation; D-glyceraldehyde 3-phosphate and pyruvate from 2-dehydro-3-deoxy-D-gluconate: step 1/2. Catalyzes the phosphorylation of 2-keto-3-deoxygluconate (KDG) to produce 2-keto-3-deoxy-6-phosphogluconate (KDPG). The polypeptide is 2-dehydro-3-deoxygluconokinase (Dickeya dadantii (strain 3937) (Erwinia chrysanthemi (strain 3937))).